The chain runs to 160 residues: Small ribosomal subunit protein uS7 (160 aa).

This sequence belongs to the universal ribosomal protein uS7 family. In terms of assembly, part of the 30S ribosomal subunit. Contacts proteins S9 and S11.

Functionally, one of the primary rRNA binding proteins, it binds directly to 16S rRNA where it nucleates assembly of the head domain of the 30S subunit. Is located at the subunit interface close to the decoding center, probably blocks exit of the E-site tRNA. The polypeptide is Small ribosomal subunit protein uS7 (Ehrlichia chaffeensis (strain ATCC CRL-10679 / Arkansas)).